Consider the following 184-residue polypeptide: Zinc metalloproteinase-disintegrin-like ammodytagin (184 aa).

Positions 1 to 90 (KSAAXVTLDL…CPAKCIDNKP (90 aa)) constitute a Peptidase M12B domain. D20 is a binding site for Ca(2+). H64 contributes to the Zn(2+) binding site. E65 is a catalytic residue. Zn(2+) is bound by residues H68 and H74. The Ca(2+) site is built by N88, V100, N103, F105, and E107. The Disintegrin domain maps to 98–124 (PAVCGNYFVELTPGSQCADGVCCDQCR). Disulfide bonds link C114/C120 and C165/C177.

This sequence belongs to the venom metalloproteinase (M12B) family. P-III subfamily. P-IIIc sub-subfamily. As to quaternary structure, heterodimer; disulfide-linked. Requires Zn(2+) as cofactor. The N-terminus is blocked. Post-translationally, N-glycosylated. Expressed by the venom gland.

The protein localises to the secreted. Its activity is regulated as follows. Inhibited by EDTA, DTT and zinc ions. Partially inhibited by L-cysteine. Not inhibited by 2-propanol or PMSF. Activity is enhanced by calcium or magnesium ions. Its function is as follows. Snake venom zinc metalloprotease that has fibrinogenolytic and hemorrhagic activities in mouse and rats. Hydrolyzes the Aalpha-chain (FGA) and more slowly the Bbeta-chain of fibrinogen (FGB), without affecting the gamma-chain. Its hemorrhagic activity results of its involvement in cleavage of basal membrane components (nidogen and fibronectin but not laminin) and depletion of fibrinogen, prothrombin (F2) and factor X (F10) in blood circulation. Also possess potent azocaseinolytic activity and cleaves insulin B-chain, hydrolyzing it at positions Gln(4)-His(5), His(10)-Leu(11) and Tyr(16)-Leu(17). The sequence is that of Zinc metalloproteinase-disintegrin-like ammodytagin from Vipera ammodytes ammodytes (Western sand viper).